A 946-amino-acid polypeptide reads, in one-letter code: Bifunctional glutamine synthetase adenylyltransferase/adenylyl-removing enzyme (946 aa).

The tract at residues M1–E440 is adenylyl removase. Positions S449–G946 are adenylyl transferase.

It belongs to the GlnE family. Mg(2+) serves as cofactor.

It carries out the reaction [glutamine synthetase]-O(4)-(5'-adenylyl)-L-tyrosine + phosphate = [glutamine synthetase]-L-tyrosine + ADP. It catalyses the reaction [glutamine synthetase]-L-tyrosine + ATP = [glutamine synthetase]-O(4)-(5'-adenylyl)-L-tyrosine + diphosphate. Involved in the regulation of glutamine synthetase GlnA, a key enzyme in the process to assimilate ammonia. When cellular nitrogen levels are high, the C-terminal adenylyl transferase (AT) inactivates GlnA by covalent transfer of an adenylyl group from ATP to specific tyrosine residue of GlnA, thus reducing its activity. Conversely, when nitrogen levels are low, the N-terminal adenylyl removase (AR) activates GlnA by removing the adenylyl group by phosphorolysis, increasing its activity. The regulatory region of GlnE binds the signal transduction protein PII (GlnB) which indicates the nitrogen status of the cell. The protein is Bifunctional glutamine synthetase adenylyltransferase/adenylyl-removing enzyme of Citrobacter koseri (strain ATCC BAA-895 / CDC 4225-83 / SGSC4696).